The chain runs to 212 residues: Uracil phosphoribosyltransferase (212 aa).

5-phospho-alpha-D-ribose 1-diphosphate-binding positions include R78, R103, and 130–138 (DPMLATGGS). Residues I193 and 198-200 (GDA) each bind uracil. D199 provides a ligand contact to 5-phospho-alpha-D-ribose 1-diphosphate.

Belongs to the UPRTase family. Mg(2+) serves as cofactor.

The enzyme catalyses UMP + diphosphate = 5-phospho-alpha-D-ribose 1-diphosphate + uracil. It functions in the pathway pyrimidine metabolism; UMP biosynthesis via salvage pathway; UMP from uracil: step 1/1. Allosterically activated by GTP. Its function is as follows. Catalyzes the conversion of uracil and 5-phospho-alpha-D-ribose 1-diphosphate (PRPP) to UMP and diphosphate. The polypeptide is Uracil phosphoribosyltransferase (Pseudomonas entomophila (strain L48)).